A 319-amino-acid polypeptide reads, in one-letter code: Aspartate carbamoyltransferase catalytic subunit (319 aa).

Positions 65 and 66 each coordinate carbamoyl phosphate. Lys93 is a binding site for L-aspartate. Residues Arg115, His149, and Gln152 each contribute to the carbamoyl phosphate site. Arg182 and Arg237 together coordinate L-aspartate. 2 residues coordinate carbamoyl phosphate: Gly278 and Pro279.

It belongs to the aspartate/ornithine carbamoyltransferase superfamily. ATCase family. In terms of assembly, heterododecamer (2C3:3R2) of six catalytic PyrB chains organized as two trimers (C3), and six regulatory PyrI chains organized as three dimers (R2).

It carries out the reaction carbamoyl phosphate + L-aspartate = N-carbamoyl-L-aspartate + phosphate + H(+). The protein operates within pyrimidine metabolism; UMP biosynthesis via de novo pathway; (S)-dihydroorotate from bicarbonate: step 2/3. Its function is as follows. Catalyzes the condensation of carbamoyl phosphate and aspartate to form carbamoyl aspartate and inorganic phosphate, the committed step in the de novo pyrimidine nucleotide biosynthesis pathway. The protein is Aspartate carbamoyltransferase catalytic subunit of Azoarcus sp. (strain BH72).